Consider the following 201-residue polypeptide: Small ribosomal subunit protein uS4c (201 aa).

The interval 14-43 is disordered; the sequence is RLGALPGLTSKRPRAGSDLRNQSRPGKKSQ. An S4 RNA-binding domain is found at 89-169; that stretch reads MRLDNILFRL…LPKHLTFHTL (81 aa).

Belongs to the universal ribosomal protein uS4 family. As to quaternary structure, part of the 30S ribosomal subunit. Contacts protein S5. The interaction surface between S4 and S5 is involved in control of translational fidelity.

The protein localises to the plastid. It is found in the chloroplast. One of the primary rRNA binding proteins, it binds directly to 16S rRNA where it nucleates assembly of the body of the 30S subunit. In terms of biological role, with S5 and S12 plays an important role in translational accuracy. This chain is Small ribosomal subunit protein uS4c (rps4), found in Gossypium hirsutum (Upland cotton).